We begin with the raw amino-acid sequence, 359 residues long: 4-galactosyl-N-acetylglucosaminide 3-alpha-L-fucosyltransferase 9 (359 aa).

Residues 1 to 11 (MTSASKGILRP) lie on the Cytoplasmic side of the membrane. Residues 12 to 32 (FLIVCIILGCFMACLLIYIKP) traverse the membrane as a helical; Signal-anchor for type II membrane protein segment. Topologically, residues 33 to 359 (TNSWIFSPME…VGNLEKWFWN (327 aa)) are lumenal. An N-linked (GlcNAc...) asparagine glycan is attached at Asn62. An acceptor-binding region spans residues 63-168 (ETTILIWVWP…RRDSDIQVPY (106 aa)). Gln75 lines the a beta-D-galactosyl-(1-&gt;4)-N-acetyl-beta-D-glucosaminyl derivative pocket. Intrachain disulfides connect Cys82/Cys335, Cys91/Cys338, and Cys190/Cys238. An N-linked (GlcNAc...) asparagine glycan is attached at Asn101. An a beta-D-galactosyl-(1-&gt;4)-N-acetyl-beta-D-glucosaminyl derivative-binding site is contributed by Glu137. Glu137 acts as the Nucleophile in catalysis. Residue Glu137 coordinates GDP-beta-L-fucose. Residue Asn153 is glycosylated (N-linked (GlcNAc...) asparagine). 11 residues coordinate GDP-beta-L-fucose: Tyr168, Val192, Ser194, Asn195, Arg202, Val226, Tyr241, Asn246, Tyr252, Glu255, and Lys256. The tract at residues 169–326 (GFLTVSTNPF…NWRKDFTVNL (158 aa)) is donor-binding. The acceptor-binding stretch occupies residues 327-359 (PRFWESHACLACDHVKRHQEYKSVGNLEKWFWN).

It belongs to the glycosyltransferase 10 family. As to quaternary structure, homodimer. Post-translationally, N-glycosylated with complex-type N-glycans.

It is found in the golgi apparatus. It localises to the trans-Golgi network membrane. The protein localises to the golgi apparatus membrane. It catalyses the reaction a beta-D-galactosyl-(1-&gt;4)-N-acetyl-beta-D-glucosaminyl derivative + GDP-beta-L-fucose = a beta-D-galactosyl-(1-&gt;4)-[alpha-L-fucosyl-(1-&gt;3)]-N-acetyl-beta-D-glucosaminyl derivative + GDP + H(+). The catalysed reaction is an alpha-Neu5Ac-(2-&gt;3)-beta-D-Gal-(1-&gt;4)-beta-D-GlcNAc-(1-&gt;3)-beta-D-Gal-(1-&gt;4)-beta-D-GlcNAc derivative + GDP-beta-L-fucose = an alpha-Neu5Ac-(2-&gt;3)-beta-D-Gal-(1-&gt;4)-beta-D-GlcNAc-(1-&gt;3)-beta-D-Gal-(1-&gt;4)-[alpha-L-Fuc-(1-&gt;3)]-beta-D-GlcNAc derivative + GDP + H(+). The enzyme catalyses alpha-N-glycoloylneuraminosyl-(2-&gt;3)-beta-D-galactosyl-(1-&gt;4)-N-acetyl-beta-D-glucosaminyl-(1-&gt;3)-beta-D-galactosyl-(1-&gt;4)-N-acetyl-beta-D-glucosaminyl-(1-&gt;3)-beta-D-galactosyl-(1-&gt;4)-beta-D-glucosyl-(1&lt;-&gt;1')-ceramide + GDP-beta-L-fucose = alpha-N-glycoloylneuraminosyl-(2-&gt;3)-beta-D-galactosyl-(1-&gt;4)-N-acetyl-beta-D-glucosaminyl-(1-&gt;3)-beta-D-galactosyl-(1-&gt;4)-[alpha-L-fucosyl-(1-&gt;3)]-N-acetyl-beta-D-glucosaminyl-(1-&gt;3)-beta-D-galactosyl-(1-&gt;4)-beta-D-glucosyl-(1&lt;-&gt;1')-ceramide + GDP + H(+). It carries out the reaction alpha-D-galactosyl-(1-&gt;3)-beta-D-galactosyl-(1-&gt;4)-N-acetyl-beta-D-glucosaminyl-(1-&gt;3)-beta-D-galactosyl-(1-&gt;4)-beta-D-glucosyl-(1&lt;-&gt;1')-ceramide + GDP-beta-L-fucose = a neolactoside IV(3)-alpha-Gal,III(3)-alpha-Fuc-nLc4Cer + GDP + H(+). It catalyses the reaction a neolactoside nLc4Cer + GDP-beta-L-fucose = a neolactoside III(3)-alpha-Fuc-nLc4Cer + GDP + H(+). The catalysed reaction is an N-acetyl-alpha-neuraminyl-(2-&gt;3)-beta-D-galactosyl-(1-&gt;4)-N-acetyl-beta-D-glucosaminyl derivative + GDP-beta-L-fucose = an alpha-Neu5Ac-(2-&gt;3)-beta-D-Gal-(1-&gt;4)-[alpha-L-Fuc-(1-&gt;3)]-beta-D-GlcNAc derivative + GDP + H(+). The enzyme catalyses beta-D-Gal-(1-&gt;4)-beta-D-GlcNAc-(1-&gt;3)-beta-D-Gal-(1-&gt;4)-D-Glc + GDP-beta-L-fucose = beta-D-Gal-(1-&gt;4)-[alpha-L-Fuc-(1-&gt;3)]-beta-D-GlcNAc-(1-&gt;3)-beta-D-Gal-(1-&gt;4)-D-Glc + GDP + H(+). It carries out the reaction an alpha-L-Fuc-(1-&gt;2)-beta-D-Gal-(1-&gt;4)-beta-D-GlcNAc derivative + GDP-beta-L-fucose = an alpha-L-Fuc-(1-&gt;2)-beta-D-Gal-(1-&gt;4)-[alpha-L-Fuc-(1-&gt;3)]-beta-D-GlcNAc derivative + GDP + H(+). It participates in protein modification; protein glycosylation. It functions in the pathway glycolipid biosynthesis. Activated by Mn2+. Its function is as follows. Catalyzes alpha(1-&gt;3) linkage of fucosyl moiety transferred from GDP-beta-L-fucose to N-acetyl glucosamine (GlcNAc) within type 2 lactosamine (LacNAc, beta-D-Gal-(1-&gt;4)-beta-D-GlcNAc-) glycan attached to glycolipids and N- or O-linked glycoproteins. Fucosylates distal type 2 LacNAc and its fucosylated (H-type 2 LacNAc) and sialylated (sialyl-type 2 LacNAc) derivatives to form Lewis x (Lex) (CD15) and Lewis y (Ley) antigenic epitopes involved in cell adhesion and differentiation. Generates Lex epitopes in the brain, presumably playing a role in the maintenance of neuronal stemness and neurite outgrowth in progenitor neural cells. Fucosylates the internal type 2 LacNAc unit of the polylactosamine chain to form VIM-2 antigen that serves as recognition epitope for SELE. Can also modify milk oligosaccharides in particular type 2 tetrasaccharide LNnT. This chain is 4-galactosyl-N-acetylglucosaminide 3-alpha-L-fucosyltransferase 9, found in Canis lupus familiaris (Dog).